Consider the following 46-residue polypeptide: PhoP/PhoQ regulator MgrB (46 aa).

A helical transmembrane segment spans residues 6 to 26 (WVALVVVVLACLLLWAQVFNM).

Belongs to the MgrB family. As to quaternary structure, may form homooligomers. Probably interacts with the periplasmic domain of PhoQ.

It localises to the cell inner membrane. Functionally, phoP-regulated transcription is redox-sensitive, being activated when the periplasm becomes more reducing. MgrB acts between DsbA/DsbB and PhoP/PhoQ in this pathway. Represses PhoP/PhoQ signaling, possibly by binding to the periplasmic domain of PhoQ, altering its activity and that of downstream effector PhoP. The protein is PhoP/PhoQ regulator MgrB of Escherichia coli O6:K15:H31 (strain 536 / UPEC).